Consider the following 392-residue polypeptide: MCISSSSLLCGINSLKYASNRVGILIPPFQTASSLNIFRPYVIFSRSHRSLSSVDVSSPSLPLREHLPLKNVYSQVPLLPVWSPIPKGPRRFLLPPKFHYRLSPPPGEFKSSPRVAIMVAVIVCLVNGVVFWHWDLARDEAIRLHDFKRFRFMMTHAQASLFNLYEGRWWTLVVSIFSHQNLAHLLVNCVAIYSFLSIVVYKFGVWKALSVYLGAGVFGNYVALQRMMNEENPFATLPNGPTKVWDLLFPKGPYPPISRPALYLGSNPEYGPIIRTATFVPQSWATGLLGASGAVYATAAIFACLFPYTEFFLFFVYPVKAGIFMPLDFIAEYVLCLLNYEKKFHVAFDAHVSGTFFGVVSSLFLLPAMWKRRSLYCVGIVKKRIWSNKAKA.

Residues 1 to 34 constitute a mitochondrion transit peptide; the sequence is MCISSSSLLCGINSLKYASNRVGILIPPFQTASS. Helical transmembrane passes span 115–135, 150–172, 185–205, 208–225, 277–297, 299–319, 321–341, and 350–370; these read VAIMVAVIVCLVNGVVFWHWD, FRFMMTHAQASLFNLYEGRWWTL, LLVNCVAIYSFLSIVVYKFGV, ALSVYLGAGVFGNYVALQ, ATFVPQSWATGLLGASGAVYA, AAIFACLFPYTEFFLFFVYPV, AGIFMPLDFIAEYVLCLLNYE, and AHVSGTFFGVVSSLFLLPAMW. Serine 292 acts as the Nucleophile in catalysis. Histidine 351 is an active-site residue.

The protein belongs to the peptidase S54 family.

It localises to the mitochondrion inner membrane. This is an uncharacterized protein from Schizosaccharomyces pombe (strain 972 / ATCC 24843) (Fission yeast).